The primary structure comprises 868 residues: Probable inorganic carbon transporter subunit DabA (868 aa).

Positions 392, 394, 574, and 589 each coordinate Zn(2+).

It belongs to the inorganic carbon transporter (TC 9.A.2) DabA family. As to quaternary structure, forms a complex with DabB. Requires Zn(2+) as cofactor.

Its subcellular location is the cell membrane. Part of an energy-coupled inorganic carbon pump. In Bacillus cereus (strain B4264), this protein is Probable inorganic carbon transporter subunit DabA.